Consider the following 101-residue polypeptide: Large ribosomal subunit protein uL23 (101 aa).

The protein belongs to the universal ribosomal protein uL23 family. In terms of assembly, part of the 50S ribosomal subunit. Contacts protein L29, and trigger factor when it is bound to the ribosome.

In terms of biological role, one of the early assembly proteins it binds 23S rRNA. One of the proteins that surrounds the polypeptide exit tunnel on the outside of the ribosome. Forms the main docking site for trigger factor binding to the ribosome. The chain is Large ribosomal subunit protein uL23 from Trichodesmium erythraeum (strain IMS101).